Consider the following 314-residue polypeptide: 2,3-dihydroxyphenylpropionate/2,3-dihydroxicinnamic acid 1,2-dioxygenase (314 aa).

Catalysis depends on H115, which acts as the Proton donor. Residue H179 is the Proton acceptor of the active site.

Belongs to the LigB/MhpB extradiol dioxygenase family. In terms of assembly, homotetramer. The cofactor is Fe(2+).

It catalyses the reaction 3-(2,3-dihydroxyphenyl)propanoate + O2 = (2Z,4E)-2-hydroxy-6-oxonona-2,4-dienedioate + H(+). The enzyme catalyses (2E)-3-(2,3-dihydroxyphenyl)prop-2-enoate + O2 = (2Z,4E,7E)-2-hydroxy-6-oxonona-2,4,7-trienedioate + H(+). It functions in the pathway aromatic compound metabolism; 3-phenylpropanoate degradation. Functionally, catalyzes the non-heme iron(II)-dependent oxidative cleavage of 2,3-dihydroxyphenylpropionic acid and 2,3-dihydroxicinnamic acid into 2-hydroxy-6-ketononadienedioate and 2-hydroxy-6-ketononatrienedioate, respectively. This Escherichia coli O157:H7 protein is 2,3-dihydroxyphenylpropionate/2,3-dihydroxicinnamic acid 1,2-dioxygenase.